The primary structure comprises 433 residues: Keratin, type I cytoskeletal 47 kDa (433 aa).

Residues methionine 1 to asparagine 73 form a head region. A coil 1A region spans residues glycine 74–tyrosine 109. Residues glycine 74–phenylalanine 385 enclose the IF rod domain. The interval leucine 110 to threonine 127 is linker 1. The tract at residues isoleucine 128–valine 219 is coil 1B. Positions arginine 220–isoleucine 242 are linker 12. Residues methionine 243–glutamate 381 form a coil 2 region. The segment at aspartate 382–serine 433 is tail.

This sequence belongs to the intermediate filament family. Heterotetramer of two type I and two type II keratins.

The sequence is that of Keratin, type I cytoskeletal 47 kDa (xk70a) from Xenopus laevis (African clawed frog).